The following is a 240-amino-acid chain: Biosynthetic peptidoglycan transglycosylase (240 aa).

Residues 12–31 (ALLWFAGGSVLLVLVFRFVP) traverse the membrane as a helical segment.

Belongs to the glycosyltransferase 51 family.

The protein resides in the cell inner membrane. It carries out the reaction [GlcNAc-(1-&gt;4)-Mur2Ac(oyl-L-Ala-gamma-D-Glu-L-Lys-D-Ala-D-Ala)](n)-di-trans,octa-cis-undecaprenyl diphosphate + beta-D-GlcNAc-(1-&gt;4)-Mur2Ac(oyl-L-Ala-gamma-D-Glu-L-Lys-D-Ala-D-Ala)-di-trans,octa-cis-undecaprenyl diphosphate = [GlcNAc-(1-&gt;4)-Mur2Ac(oyl-L-Ala-gamma-D-Glu-L-Lys-D-Ala-D-Ala)](n+1)-di-trans,octa-cis-undecaprenyl diphosphate + di-trans,octa-cis-undecaprenyl diphosphate + H(+). The protein operates within cell wall biogenesis; peptidoglycan biosynthesis. In terms of biological role, peptidoglycan polymerase that catalyzes glycan chain elongation from lipid-linked precursors. This is Biosynthetic peptidoglycan transglycosylase from Pseudomonas fluorescens (strain Pf0-1).